The primary structure comprises 321 residues: Tetraacyldisaccharide 4'-kinase (321 aa).

An ATP-binding site is contributed by 54-61 (SVGGTGKT).

The protein belongs to the LpxK family.

It catalyses the reaction a lipid A disaccharide + ATP = a lipid IVA + ADP + H(+). Its pathway is glycolipid biosynthesis; lipid IV(A) biosynthesis; lipid IV(A) from (3R)-3-hydroxytetradecanoyl-[acyl-carrier-protein] and UDP-N-acetyl-alpha-D-glucosamine: step 6/6. In terms of biological role, transfers the gamma-phosphate of ATP to the 4'-position of a tetraacyldisaccharide 1-phosphate intermediate (termed DS-1-P) to form tetraacyldisaccharide 1,4'-bis-phosphate (lipid IVA). This Rickettsia africae (strain ESF-5) protein is Tetraacyldisaccharide 4'-kinase.